The primary structure comprises 147 residues: 3-hydroxyacyl-[acyl-carrier-protein] dehydratase FabZ (147 aa).

H51 is a catalytic residue.

Belongs to the thioester dehydratase family. FabZ subfamily.

Its subcellular location is the cytoplasm. The catalysed reaction is a (3R)-hydroxyacyl-[ACP] = a (2E)-enoyl-[ACP] + H2O. Involved in unsaturated fatty acids biosynthesis. Catalyzes the dehydration of short chain beta-hydroxyacyl-ACPs and long chain saturated and unsaturated beta-hydroxyacyl-ACPs. This chain is 3-hydroxyacyl-[acyl-carrier-protein] dehydratase FabZ, found in Anaplasma marginale (strain Florida).